The following is a 471-amino-acid chain: Major facilitator-type transporter psiT1 (471 aa).

Residues Met1–Pro36 are disordered. Over residues Ser14–Pro36 the composition is skewed to polar residues. Residue Asn25 is glycosylated (N-linked (GlcNAc...) asparagine). The next 8 helical transmembrane spans lie at Thr44–Ile64, Ala108–Ile128, Pro140–Gln160, Leu168–Phe188, Gly212–Leu232, Ala237–Leu257, Leu322–Phe342, and Val356–Ile376. A glycan (N-linked (GlcNAc...) asparagine) is linked at Asn384. A helical membrane pass occupies residues Val424 to Val444.

Belongs to the major facilitator superfamily. TCR/Tet family.

The protein resides in the membrane. In terms of biological role, major facilitator-type transporter; part of the gene cluster that mediates the biosynthesis of psilocybin, a psychotropic tryptamine-derived natural product. The polypeptide is Major facilitator-type transporter psiT1 (Psilocybe cyanescens).